The primary structure comprises 415 residues: Tyrosine-protein phosphatase non-receptor type 2 (415 aa).

The Tyrosine-protein phosphatase domain maps to 5 to 275 (IEREFEELDT…RFSYMAIIEG (271 aa)). A Phosphotyrosine modification is found at Y22. S52 is subject to Phosphoserine. Y68 bears the Phosphotyrosine mark. Residues D182, 216 to 222 (CSAGIGR), and Q260 contribute to the substrate site. C216 functions as the Phosphocysteine intermediate in the catalytic mechanism. C216 bears the S-nitrosocysteine mark. S293, S298, and S304 each carry phosphoserine. An endoplasmic reticulum location region spans residues 346–415 (ESALRKRIRE…WTLFFQQNAL (70 aa)). The segment at 376–415 (ERKRKRWLYWQPILTKMGFMSVILVGAFVGWTLFFQQNAL) is mediates interaction with STX17.

This sequence belongs to the protein-tyrosine phosphatase family. Non-receptor class 1 subfamily. As to quaternary structure, interacts with RMDN3. Isoform 1 interacts with TMED9. Isoform 1 interacts with STX17; dephosphorylates STX17. Interacts with ITGA1 (via cytoplasmic domain); activates the phosphatase activity towards EGFR. Interacts with TRAF2; probably involved in tumor necrosis factor-mediated signaling. Interacts with MET. Interacts with FAM220A and STAT3; interaction with FAM220A promotes interaction of PTPN2 with transcriptional activator STAT3, leading to dephosphorylation of STAT3 by PTPN2 and negative regulation of STAT3 transcriptional activator activity. Specifically phosphorylated in a cell cycle-dependent manner by cyclin-dependent kinases CDK1 and CDK2. Probably activated through phosphorylation by PKR. Ubiquitously expressed. Isoform 2 is probably the major isoform. Isoform 1 is expressed in T-cells and in placenta.

It is found in the endoplasmic reticulum. Its subcellular location is the endoplasmic reticulum-Golgi intermediate compartment. It localises to the nucleus. The protein localises to the cytoplasm. The protein resides in the cell membrane. The enzyme catalyses O-phospho-L-tyrosyl-[protein] + H2O = L-tyrosyl-[protein] + phosphate. Non-receptor type tyrosine-specific phosphatase that dephosphorylates receptor protein tyrosine kinases including INSR, EGFR, CSF1R, PDGFR. Also dephosphorylates non-receptor protein tyrosine kinases like JAK1, JAK2, JAK3, Src family kinases, STAT1, STAT3 and STAT6 either in the nucleus or the cytoplasm. Negatively regulates numerous signaling pathways and biological processes like hematopoiesis, inflammatory response, cell proliferation and differentiation, and glucose homeostasis. Plays a multifaceted and important role in the development of the immune system. Functions in T-cell receptor signaling through dephosphorylation of FYN and LCK to control T-cells differentiation and activation. Dephosphorylates CSF1R, negatively regulating its downstream signaling and macrophage differentiation. Negatively regulates cytokine (IL2/interleukin-2 and interferon)-mediated signaling through dephosphorylation of the cytoplasmic kinases JAK1, JAK3 and their substrate STAT1, that propagate signaling downstream of the cytokine receptors. Also regulates the IL6/interleukin-6 and IL4/interleukin-4 cytokine signaling through dephosphorylation of STAT3 and STAT6 respectively. In addition to the immune system, it is involved in anchorage-dependent, negative regulation of EGF-stimulated cell growth. Activated by the integrin ITGA1/ITGB1, it dephosphorylates EGFR and negatively regulates EGF signaling. Dephosphorylates PDGFRB and negatively regulates platelet-derived growth factor receptor-beta signaling pathway and therefore cell proliferation. Negatively regulates tumor necrosis factor-mediated signaling downstream via MAPK through SRC dephosphorylation. May also regulate the hepatocyte growth factor receptor signaling pathway through dephosphorylation of the hepatocyte growth factor receptor MET. Also plays an important role in glucose homeostasis. For instance, negatively regulates the insulin receptor signaling pathway through the dephosphorylation of INSR and control gluconeogenesis and liver glucose production through negative regulation of the IL6 signaling pathways. May also bind DNA. The chain is Tyrosine-protein phosphatase non-receptor type 2 (PTPN2) from Homo sapiens (Human).